The sequence spans 738 residues: MHRGGDRSTDPSSGPAPGSRGGGDGRFGRGPSRWSSGGGGGGSGSPPHRFSRGGGGGGGDGGGGGGGGGRFHPYRGPSDHSGGGGYRSGGGGEYGEPGSGPRHRYGSGRGDHSDHDNRNNYVKLFIGSVPRTATEDDVRPLFEEHGDVVEVALIKDRKTGEQQGCCFVKYATSEEAERAIRALHNQYTLPGAMGPIQVRYADGERERHGAIEHKLFVASLNKQATAKEIEEIFAPYGHVEDVYIMKDGMRQSRGCGFVKFSSREPALAAMSALSGNYVMRGCEQPLIIRFADPKRPRPGESRGGPAFGGPGFSPRSDAALVIRPTANLDEPRGRHMPPDSWHPSSPRSAPHQFNNFGSDNPMAPKGSTVTSTTDTATFRPQMFSGNGSLSSQTAVPSSSHMGMNPPPMAQGHHLGGQQIPPLQKLPGLPQNFPVQLQNNQQGQPLQGPAQQIGQLQVPQSMGPGSFGQNMLSGQLPVSQPLMQQNASVGAVQAPSAVSNSMQAIPGQQHLPSNVAPQMLQQPVQQMPSQAPQLLLQQQAALQSSYQSSQQAIYQLQQQLQLMQQQQQSNLNHQQPTQGQPVQSSNPGAPNAIIPSNINTIPQQATSPAVPLTCNWTEHTSPEGFKYYYNSITRESKWDKPEEYVLYEQQQQQQQQQKLLLLQQHQQKLAMQQLQSPPQAQTHPAMQPVQQIPQAQQGQQQMQMKQQELNYTQLQTPGAIDPSRIQQGIQSAQERAWKS.

The disordered stretch occupies residues 1-118 (MHRGGDRSTD…RGDHSDHDNR (118 aa)). 2 stretches are compositionally biased toward gly residues: residues 52 to 70 (RGGGGGGGDGGGGGGGGGR) and 81 to 98 (SGGGGYRSGGGGEYGEPG). Basic and acidic residues predominate over residues 109-118 (RGDHSDHDNR). RRM domains are found at residues 122–203 (VKLF…YADG) and 213–293 (HKLF…FADP). Disordered regions lie at residues 292–451 (DPKR…PAQQ) and 566–595 (QQSNLNHQQPTQGQPVQSSNPGAPNAIIPS). Positions 301-311 (SRGGPAFGGPG) are enriched in gly residues. The segment covering 342–358 (HPSSPRSAPHQFNNFGS) has biased composition (polar residues). Positions 368-377 (TVTSTTDTAT) are enriched in low complexity. Polar residues predominate over residues 383-401 (FSGNGSLSSQTAVPSSSHM). Positions 435–451 (QLQNNQQGQPLQGPAQQ) are enriched in low complexity. Residues 575 to 595 (PTQGQPVQSSNPGAPNAIIPS) show a composition bias toward polar residues. Positions 609-642 (VPLTCNWTEHTSPEGFKYYYNSITRESKWDKPEE) constitute a WW domain. Residues 670–738 (MQQLQSPPQA…QSAQERAWKS (69 aa)) form a disordered region. Over residues 683–706 (PAMQPVQQIPQAQQGQQQMQMKQQ) the composition is skewed to low complexity. Over residues 723 to 732 (RIQQGIQSAQ) the composition is skewed to polar residues.

Interacts with FY. Binds to SF1, FIK, RPRD1B, OsI_31983 and MADS8.

It is found in the nucleus. Its function is as follows. Plays a major role in the promotion of the transition of the vegetative meristem to reproductive development. Required for RNA-mediated chromatin silencing of a range of loci in the genome. Cotranscriptionally recognizes aberrant RNA and marks it for silencing. Controls alternative cleavage and polyadenylation on pre-mRNAs and antisense RNAs. Regulates flowering time, seed size and cell volume, probably via the modulation of cell size. In Oryza sativa subsp. indica (Rice), this protein is Flowering time control protein FCA.